A 310-amino-acid polypeptide reads, in one-letter code: Malate dehydrogenase (310 aa).

NAD(+)-binding positions include 7–13 (GAAGGIG) and D34. Substrate-binding residues include R81 and R87. NAD(+)-binding positions include N94 and 117-119 (ITN). Positions 119 and 153 each coordinate substrate. Catalysis depends on H177, which acts as the Proton acceptor. M227 contacts NAD(+).

The protein belongs to the LDH/MDH superfamily. MDH type 1 family. In terms of assembly, homodimer.

It catalyses the reaction (S)-malate + NAD(+) = oxaloacetate + NADH + H(+). Its function is as follows. Catalyzes the reversible oxidation of malate to oxaloacetate. This is Malate dehydrogenase from Vibrio vulnificus (strain CMCP6).